The primary structure comprises 61 residues: Small ribosomal subunit protein uS14 (61 aa).

Zn(2+) contacts are provided by Cys24, Cys27, Cys40, and Cys43.

The protein belongs to the universal ribosomal protein uS14 family. Zinc-binding uS14 subfamily. In terms of assembly, part of the 30S ribosomal subunit. Contacts proteins S3 and S10. The cofactor is Zn(2+).

Functionally, binds 16S rRNA, required for the assembly of 30S particles and may also be responsible for determining the conformation of the 16S rRNA at the A site. The polypeptide is Small ribosomal subunit protein uS14 (Clostridium botulinum (strain ATCC 19397 / Type A)).